The chain runs to 93 residues: NADH-ubiquinone oxidoreductase chain 4L (93 aa).

3 helical membrane passes run A2–L22, I27–V47, and I62–Y82.

Belongs to the complex I subunit 4L family.

Its subcellular location is the mitochondrion inner membrane. The enzyme catalyses a ubiquinone + NADH + 5 H(+)(in) = a ubiquinol + NAD(+) + 4 H(+)(out). In terms of biological role, core subunit of the mitochondrial membrane respiratory chain NADH dehydrogenase (Complex I) that is believed to belong to the minimal assembly required for catalysis. Complex I functions in the transfer of electrons from NADH to the respiratory chain. The immediate electron acceptor for the enzyme is believed to be ubiquinone. This is NADH-ubiquinone oxidoreductase chain 4L (ND4L) from Mycosarcoma maydis (Corn smut fungus).